The sequence spans 125 residues: Large ribosomal subunit protein bL12 (125 aa).

This sequence belongs to the bacterial ribosomal protein bL12 family. As to quaternary structure, homodimer. Part of the ribosomal stalk of the 50S ribosomal subunit. Forms a multimeric L10(L12)X complex, where L10 forms an elongated spine to which 2 to 4 L12 dimers bind in a sequential fashion. Binds GTP-bound translation factors.

Functionally, forms part of the ribosomal stalk which helps the ribosome interact with GTP-bound translation factors. Is thus essential for accurate translation. The protein is Large ribosomal subunit protein bL12 of Thioalkalivibrio sulfidiphilus (strain HL-EbGR7).